Consider the following 403-residue polypeptide: Alkaline protease 1 (403 aa).

Positions 1–21 (MQSIKRTLLLLGALLPAALAA) are cleaved as a signal peptide. Residues 22-125 (PAREPHPSSN…QIWYLDALTT (104 aa)) constitute a propeptide that is removed on maturation. The 85-residue stretch at 36–120 (KYIITFKSGI…HVEEDQIWYL (85 aa)) folds into the Inhibitor I9 domain. The region spanning 130-403 (PWGLGSISHK…PNKLAYNGAA (274 aa)) is the Peptidase S8 domain. Catalysis depends on charge relay system residues Asp-162 and His-193. Asn-253 and Asn-307 each carry an N-linked (GlcNAc...) asparagine glycan. Catalysis depends on Ser-349, which acts as the Charge relay system.

It belongs to the peptidase S8 family.

Its subcellular location is the secreted. The enzyme catalyses Hydrolysis of proteins with broad specificity, and of Bz-Arg-OEt &gt; Ac-Tyr-OEt. Does not hydrolyze peptide amides.. Functionally, secreted alkaline protease that allows assimilation of proteinaceous substrates. The protein is Alkaline protease 1 (alp1) of Aspergillus clavatus (strain ATCC 1007 / CBS 513.65 / DSM 816 / NCTC 3887 / NRRL 1 / QM 1276 / 107).